The primary structure comprises 221 residues: UPF0758 protein YicR (221 aa).

The MPN domain occupies 99-221; sequence ALLSPEMTLE…YVSFAERGWI (123 aa). His-170, His-172, and Asp-183 together coordinate Zn(2+). A JAMM motif motif is present at residues 170–183; that stretch reads HNHPSGCAEPSKAD.

This sequence belongs to the UPF0758 family. YicR subfamily.

This is UPF0758 protein YicR from Salmonella arizonae (strain ATCC BAA-731 / CDC346-86 / RSK2980).